The sequence spans 586 residues: Merlin (586 aa).

The residue at position 9 (S9) is a Phosphoserine. In terms of domain architecture, FERM spans F18–R307. The segment at K325–R354 is disordered. Position 514 is a phosphoserine; by PAK (S514). The segment at L557 to I586 is disordered.

Interacts with NHERF1, HGS and AGAP2. Interacts with SGSM3. Interacts (via FERM domain) with MPP1. Interacts with LAYN and WWC1. Interacts with the CUL4A-RBX1-DDB1-VprBP/DCAF1 E3 ubiquitin-protein ligase complex. The unphosphorylated form interacts (via FERM domain) with VPRBP/DCAF1. Interacts (via FERM domain) with NOP53; the interaction is direct. Interacts with SCHIP1; the interaction is direct. Post-translationally, ubiquitinated by the CUL4A-RBX1-DDB1-DCAF1/VprBP E3 ubiquitin-protein ligase complex for ubiquitination and subsequent proteasome-dependent degradation. Phosphorylation of Ser-514 inhibits nuclear localization by disrupting the intramolecular association of the FERM domain with the C-terminal tail. The dephosphorylation of Ser-514 favors the interaction with NOP53.

It localises to the cell membrane. Its subcellular location is the cell projection. The protein localises to the cytoplasm. It is found in the cytoskeleton. The protein resides in the nucleus. In terms of biological role, probable regulator of the Hippo/SWH (Sav/Wts/Hpo) signaling pathway, a signaling pathway that plays a pivotal role in tumor suppression by restricting proliferation and promoting apoptosis. Along with WWC1 can synergistically induce the phosphorylation of LATS1 and LATS2 and can probably function in the regulation of the Hippo/SWH (Sav/Wts/Hpo) signaling pathway. May act as a membrane stabilizing protein. May inhibit PI3 kinase by binding to AGAP2 and impairing its stimulating activity. Suppresses cell proliferation and tumorigenesis by inhibiting the CUL4A-RBX1-DDB1-VprBP/DCAF1 E3 ubiquitin-protein ligase complex Plays a role in lens development and is required for complete fiber cell terminal differentiation, maintenance of cell polarity and separation of the lens vesicle from the corneal epithelium. The polypeptide is Merlin (Nf2) (Rattus norvegicus (Rat)).